Consider the following 85-residue polypeptide: UPF0297 protein LBUL_1485 (85 aa).

The protein belongs to the UPF0297 family.

This is UPF0297 protein LBUL_1485 from Lactobacillus delbrueckii subsp. bulgaricus (strain ATCC BAA-365 / Lb-18).